The sequence spans 1202 residues: DNA-directed RNA polymerase subunit beta (1202 aa).

Belongs to the RNA polymerase beta chain family. As to quaternary structure, the RNAP catalytic core consists of 2 alpha, 1 beta, 1 beta' and 1 omega subunit. When a sigma factor is associated with the core the holoenzyme is formed, which can initiate transcription.

It catalyses the reaction RNA(n) + a ribonucleoside 5'-triphosphate = RNA(n+1) + diphosphate. Functionally, DNA-dependent RNA polymerase catalyzes the transcription of DNA into RNA using the four ribonucleoside triphosphates as substrates. The protein is DNA-directed RNA polymerase subunit beta of Leuconostoc mesenteroides subsp. mesenteroides (strain ATCC 8293 / DSM 20343 / BCRC 11652 / CCM 1803 / JCM 6124 / NCDO 523 / NBRC 100496 / NCIMB 8023 / NCTC 12954 / NRRL B-1118 / 37Y).